We begin with the raw amino-acid sequence, 67 residues long: DNA-directed RNA polymerase subunit omega (67 aa).

Belongs to the RNA polymerase subunit omega family. The RNAP catalytic core consists of 2 alpha, 1 beta, 1 beta' and 1 omega subunit. When a sigma factor is associated with the core the holoenzyme is formed, which can initiate transcription.

It carries out the reaction RNA(n) + a ribonucleoside 5'-triphosphate = RNA(n+1) + diphosphate. Its function is as follows. Promotes RNA polymerase assembly. Latches the N- and C-terminal regions of the beta' subunit thereby facilitating its interaction with the beta and alpha subunits. In Listeria innocua serovar 6a (strain ATCC BAA-680 / CLIP 11262), this protein is DNA-directed RNA polymerase subunit omega.